The chain runs to 561 residues: Lipase maturation factor 1 (561 aa).

The tract at residues 1 to 32 (MAAPRESLRRRKAGAGDPEPEAPPGQGRDLKG) is disordered. Residues 1-42 (MAAPRESLRRRKAGAGDPEPEAPPGQGRDLKGRPARLRAGTF) are Cytoplasmic-facing. Residues 43–65 (WLTRIVLLRALAFVYFVAFLVAF) form a helical membrane-spanning segment. At 66–120 (HQNKQLIGDRGLLPCRAYLQSVQRHFGGRVSWDALSYAPTILWLLDWSHMDANLD) the chain is on the lumenal side. A helical transmembrane segment spans residues 121-144 (ALALLGLGISSFILVSGCANMVLM). Residues 145–200 (AALWVLYMSLVNVGQIWYSFGWESQLLETGFLGIFLCPLWTLSALPRGTPTSWVVM) are Cytoplasmic-facing. A helical membrane pass occupies residues 201 to 214 (WGFRWLIFRIMLGA). Topologically, residues 215-285 (GLIKIRGDRC…LGRRMCIVHG (71 aa)) are lumenal. A helical membrane pass occupies residues 286 to 314 (ALQVLFQVVLIISGNLSFLNWLTIVPSLA). Topologically, residues 315–360 (CFDDATLGGLFPSGPGRLKDQVLKIQEEETRGARAPRTRGSVARGT) are cytoplasmic. Residues 361–382 (VNLALGILVAWLSIPVVLNLLS) traverse the membrane as a helical segment. At 383–561 (PRQVMNSSFN…SRQWPYPEPE (179 aa)) the chain is on the lumenal side.

Belongs to the lipase maturation factor family. In terms of assembly, interacts with LPL and SEL1L.

Its subcellular location is the endoplasmic reticulum membrane. Functionally, involved in the maturation of specific proteins in the endoplasmic reticulum. Required for maturation and transport of active lipoprotein lipase (LPL) through the secretory pathway. Each LMF1 molecule chaperones 50 or more molecules of LPL. The sequence is that of Lipase maturation factor 1 (LMF1) from Bos taurus (Bovine).